Reading from the N-terminus, the 390-residue chain is Homoserine O-succinyltransferase (390 aa).

Positions 56 to 365 (NAVLICHALS…SPHGHDAFLL (310 aa)) constitute an AB hydrolase-1 domain. Serine 162 functions as the Nucleophile in the catalytic mechanism. Residue arginine 232 coordinates substrate. Catalysis depends on residues aspartate 327 and histidine 360. Aspartate 361 provides a ligand contact to substrate.

This sequence belongs to the AB hydrolase superfamily. MetX family. As to quaternary structure, homodimer.

The protein resides in the cytoplasm. It catalyses the reaction L-homoserine + succinyl-CoA = O-succinyl-L-homoserine + CoA. Its pathway is amino-acid biosynthesis; L-methionine biosynthesis via de novo pathway; O-succinyl-L-homoserine from L-homoserine: step 1/1. Its function is as follows. Transfers a succinyl group from succinyl-CoA to L-homoserine, forming succinyl-L-homoserine. In vitro, also has serine succinyl transferase activity. In Litchfieldella anticariensis (strain DSM 16096 / CECT 5854 / CIP 108499 / LMG 22089 / FP35) (Halomonas anticariensis), this protein is Homoserine O-succinyltransferase.